An 846-amino-acid chain; its full sequence is Pseudolaratriene synthase, chloroplastic (846 aa).

A chloroplast-targeting transit peptide spans 1 to 58; sequence MSRFTSATHGLNLSIKMPISVSQVPSIRSNTSKYELQKLRSTGRSVLQTRRQLAIINM. The Mg(2+) site is built by aspartate 595, aspartate 599, and aspartate 747. The DDXXD motif motif lies at 595–599; the sequence is DDIYD.

It belongs to the terpene synthase family. It depends on Mg(2+) as a cofactor. Expressed in young and mature roots. Expressed at low levels in barks.

The protein localises to the plastid. Its subcellular location is the chloroplast. It carries out the reaction (2E,6E,10E)-geranylgeranyl diphosphate = pseudolaratriene + diphosphate. It participates in terpene metabolism. Its function is as follows. Converts geranylgeranyl diphosphate to an new 5,7-fused bicyclic diterpene, named pseudolaratriene. Catalyzes the first committed step in pseudolaric acid B (PAB) biosynthesis. PAB exhibits antiproliferative activity by inhibiting microtubule polymerization, and has demonstrated antitumor properties against several cancer types. In Pseudolarix amabilis (Golden larch), this protein is Pseudolaratriene synthase, chloroplastic.